A 134-amino-acid polypeptide reads, in one-letter code: Small ribosomal subunit protein bS6 (134 aa).

Residues 99–134 (EPSAMMQKRDRDERKDRERGRRRDDDGYVGERNEEG) form a disordered region. The span at 105-134 (QKRDRDERKDRERGRRRDDDGYVGERNEEG) shows a compositional bias: basic and acidic residues.

This sequence belongs to the bacterial ribosomal protein bS6 family.

Its function is as follows. Binds together with bS18 to 16S ribosomal RNA. The chain is Small ribosomal subunit protein bS6 from Methylobacterium sp. (strain 4-46).